The chain runs to 174 residues: MSRAANRRPGLSAGQLAAATASPLLSLLLLLACCADACRGTPISPQRLPPEQELQLWNEIPEACASFLSVDSQPQASVALRKLCRVLMEIFQKPQEQTEKDNAKRFLFHYSKTQKLGNSNVVSSVVHPLLQLVPQLHERRMKRYKVNEYQGPVAPSGGFFLFRPRNGKRSTSFI.

The N-terminal stretch at 1–37 is a signal peptide; it reads MSRAANRRPGLSAGQLAAATASPLLSLLLLLACCADA. Positions 38-105 are excised as a propeptide; sequence CRGTPISPQR…EQTEKDNAKR (68 aa). Methionine 141 carries the post-translational modification Methionine sulfoxide; partial. Asparagine 166 carries the asparagine amide modification. Residues 170 to 174 constitute a propeptide that is removed on maturation; the sequence is STSFI.

The protein belongs to the NmU family. In terms of tissue distribution, expressed throughout the gastrointestinal tract with highest levels in the duodenum and jejunum. Low levels in spinal cord, hypothalamus, and stomach. Neuromedin-U-23: Expressed in the small intestine and the pituitary gland (at protein level). Neuromedin precursor-related peptides: Expressed in pituitary gland and small intestine (at protein level).

It localises to the secreted. Its function is as follows. Ligand for receptors NMUR1 and NMUR2. Receptor-binding is very tight if not irreversible and triggers an increase in the cytosolic Ca(2+) concentration. Stimulates muscle contractions of specific regions of the gastrointestinal tract. In rat, NMU stimulates contractions of stomach circular muscle. Functionally, does not function as a ligand for either NMUR1 or NMUR2. Indirectly induces prolactin release although its potency is much lower than that of neuromedin precursor-related peptide 36. In terms of biological role, does not function as a ligand for either NMUR1 or NMUR2. Indirectly induces prolactin release from lactotroph cells in the pituitary gland, probably via the hypothalamic dopaminergic system. In Rattus norvegicus (Rat), this protein is Neuromedin-U (Nmu).